The following is a 262-amino-acid chain: Zinc import ATP-binding protein ZnuC (262 aa).

Residues 4–220 (LNLSGVRLSH…PEYLALFGPR (217 aa)) enclose the ABC transporter domain. Residue 36–43 (GPNGAGKS) coordinates ATP. The segment at 238–262 (ADGSVLPLAEGGGEPHTHGPGCRHG) is disordered.

This sequence belongs to the ABC transporter superfamily. Zinc importer (TC 3.A.1.15.5) family. As to quaternary structure, the complex is composed of two ATP-binding proteins (ZnuC), two transmembrane proteins (ZnuB) and a solute-binding protein (ZnuA).

It localises to the cell inner membrane. It carries out the reaction Zn(2+)(out) + ATP(in) + H2O(in) = Zn(2+)(in) + ADP(in) + phosphate(in) + H(+)(in). Its function is as follows. Part of the ABC transporter complex ZnuABC involved in zinc import. Responsible for energy coupling to the transport system. The chain is Zinc import ATP-binding protein ZnuC from Paramagnetospirillum magneticum (strain ATCC 700264 / AMB-1) (Magnetospirillum magneticum).